The sequence spans 645 residues: 1-deoxy-D-xylulose-5-phosphate synthase 1 (645 aa).

The interval 1 to 20 (MTDTKTPTLDRVAGPADLRS) is disordered. Residues histidine 78 and 119–121 (AHS) contribute to the thiamine diphosphate site. A Mg(2+)-binding site is contributed by aspartate 150. Thiamine diphosphate contacts are provided by residues 151-152 (GS), asparagine 179, tyrosine 291, and glutamate 373. Residue asparagine 179 coordinates Mg(2+).

Belongs to the transketolase family. DXPS subfamily. In terms of assembly, homodimer. Requires Mg(2+) as cofactor. Thiamine diphosphate is required as a cofactor.

The enzyme catalyses D-glyceraldehyde 3-phosphate + pyruvate + H(+) = 1-deoxy-D-xylulose 5-phosphate + CO2. The protein operates within metabolic intermediate biosynthesis; 1-deoxy-D-xylulose 5-phosphate biosynthesis; 1-deoxy-D-xylulose 5-phosphate from D-glyceraldehyde 3-phosphate and pyruvate: step 1/1. Catalyzes the acyloin condensation reaction between C atoms 2 and 3 of pyruvate and glyceraldehyde 3-phosphate to yield 1-deoxy-D-xylulose-5-phosphate (DXP). The protein is 1-deoxy-D-xylulose-5-phosphate synthase 1 of Roseobacter denitrificans (strain ATCC 33942 / OCh 114) (Erythrobacter sp. (strain OCh 114)).